Consider the following 104-residue polypeptide: Large ribosomal subunit protein bL21 (104 aa).

Belongs to the bacterial ribosomal protein bL21 family. As to quaternary structure, part of the 50S ribosomal subunit. Contacts protein L20.

Functionally, this protein binds to 23S rRNA in the presence of protein L20. This chain is Large ribosomal subunit protein bL21, found in Clostridium botulinum (strain Kyoto / Type A2).